Here is a 90-residue protein sequence, read N- to C-terminus: Probable Fe(2+)-trafficking protein (90 aa).

This sequence belongs to the Fe(2+)-trafficking protein family. As to quaternary structure, monomer.

Functionally, could be a mediator in iron transactions between iron acquisition and iron-requiring processes, such as synthesis and/or repair of Fe-S clusters in biosynthetic enzymes. In Yersinia pestis bv. Antiqua (strain Antiqua), this protein is Probable Fe(2+)-trafficking protein.